Consider the following 355-residue polypeptide: Small ribosomal subunit protein uS2 (355 aa).

This sequence belongs to the universal ribosomal protein uS2 family.

In Methylobacterium radiotolerans (strain ATCC 27329 / DSM 1819 / JCM 2831 / NBRC 15690 / NCIMB 10815 / 0-1), this protein is Small ribosomal subunit protein uS2.